The primary structure comprises 96 residues: RNA-binding protein Hfq (96 aa).

Residues 9–68 (DPYLNALRRERIPVSIYLVNGIKLQGQIESFDQFVILLKNTVNQMVYKHAISTVVPARSV) enclose the Sm domain. The interval 65–96 (ARSVSHHNNPQQQQQHSQQTESAAPAAEPQAE) is disordered. The segment covering 70–96 (HHNNPQQQQQHSQQTESAAPAAEPQAE) has biased composition (low complexity).

Belongs to the Hfq family. Homohexamer.

RNA chaperone that binds small regulatory RNA (sRNAs) and mRNAs to facilitate mRNA translational regulation in response to envelope stress, environmental stress and changes in metabolite concentrations. Also binds with high specificity to tRNAs. This is RNA-binding protein Hfq from Mannheimia succiniciproducens (strain KCTC 0769BP / MBEL55E).